The primary structure comprises 269 residues: Energy-coupling factor transporter ATP-binding protein EcfA1 (269 aa).

Residues 8 to 242 enclose the ABC transporter domain; the sequence is IVFKNVSFQY…AEELTRIGLD (235 aa). ATP is bound at residue 42 to 49; that stretch reads GHNGSGKS.

The protein belongs to the ABC transporter superfamily. Energy-coupling factor EcfA family. As to quaternary structure, forms a stable energy-coupling factor (ECF) transporter complex composed of 2 membrane-embedded substrate-binding proteins (S component), 2 ATP-binding proteins (A component) and 2 transmembrane proteins (T component).

It is found in the cell membrane. Functionally, ATP-binding (A) component of a common energy-coupling factor (ECF) ABC-transporter complex. Unlike classic ABC transporters this ECF transporter provides the energy necessary to transport a number of different substrates. This is Energy-coupling factor transporter ATP-binding protein EcfA1 from Staphylococcus aureus (strain Mu50 / ATCC 700699).